A 655-amino-acid polypeptide reads, in one-letter code: SRSF protein kinase 1 (655 aa).

Residues 1-57 (MERKVLALQARKKRTKAKKDKAQRKSETQHRGSAPHSESDLPEQEEEILGSDDDEQE) are disordered. The span at 10–22 (ARKKRTKAKKDKA) shows a compositional bias: basic residues. Acidic residues predominate over residues 40 to 57 (DLPEQEEEILGSDDDEQE). S51 bears the Phosphoserine; by CK2 mark. One can recognise a Protein kinase domain in the interval 80 to 653 (YHVIRKLGWG…AAECLRHPWL (574 aa)). ATP-binding positions include 86–94 (LGWGHFSTV), K109, and 166–168 (EVL). D213 serves as the catalytic Proton acceptor. Disordered regions lie at residues 238–341 (WQRS…QDQT) and 397–417 (FLSS…CTPI). Basic residues predominate over residues 265–276 (KNKKKKLKKKQK). Composition is skewed to basic and acidic residues over residues 277–288 (RQAELLEKRMQE) and 304–318 (NKQE…RPLK). Residues S309, S311, and S333 each carry the phosphoserine modification. At S555 the chain carries Phosphoserine; by CK2.

This sequence belongs to the protein kinase superfamily. CMGC Ser/Thr protein kinase family. In terms of assembly, monomer. Isoform 2 is found in a multisubunit complex containing seven proteins, named toposome, which separates entangled circular chromatin DNA during chromosome segregation. Isoform 2 interacts with DNAJC8 and AHSA1/AHA1 and this mediates formation of a complex with the Hsp70 /Hsp90 machinery. Isoform 1 is found in a complex with: DHX9, MOV10, MATR3, HNRNPU, NCL, DDX21, HSD17B4, PABPC1, HNRNPM, IGF2BP1, SYNCRIP, RPL3, VIM, YBX1, NPM1, HNRNPA2B1, HNRNPC, RPLP0, RPL7A and RALY. Isoform 2 binds to IGF2BP1, SYNCRIP, HNRNPA2B1 and HNRNPC. Isoform 1 and isoform 2 interact with SAFB which inhibits its activity. Isoform 2 interacts with SAFB2 which inhibits its activity. As to quaternary structure, (Microbial infection) Isoform 2 interacts with HHV-1 ICP27 protein. The cofactor is Mg(2+). Isoform 2 is predominantly expressed in the testis but is also present at lower levels in heart, ovary, small intestine, liver, kidney, pancreas and skeletal muscle. Isoform 1 is only seen in the testis, at lower levels than isoform 2. Highly expressed in different erythroid and lymphoid cell lines, with isoform 2 being far more abundant than isoform 1.

It is found in the cytoplasm. The protein resides in the nucleus. It localises to the nucleus matrix. Its subcellular location is the microsome. The protein localises to the nucleoplasm. It is found in the nucleus speckle. The protein resides in the chromosome. The enzyme catalyses L-seryl-[protein] + ATP = O-phospho-L-seryl-[protein] + ADP + H(+). The catalysed reaction is L-threonyl-[protein] + ATP = O-phospho-L-threonyl-[protein] + ADP + H(+). Activated by phosphorylation on Ser-51 and Ser-555. Serine/arginine-rich protein-specific kinase which specifically phosphorylates its substrates at serine residues located in regions rich in arginine/serine dipeptides, known as RS domains and is involved in the phosphorylation of SR splicing factors and the regulation of splicing. Plays a central role in the regulatory network for splicing, controlling the intranuclear distribution of splicing factors in interphase cells and the reorganization of nuclear speckles during mitosis. Can influence additional steps of mRNA maturation, as well as other cellular activities, such as chromatin reorganization in somatic and sperm cells and cell cycle progression. Isoform 2 phosphorylates SFRS2, ZRSR2, LBR and PRM1. Isoform 2 phosphorylates SRSF1 using a directional (C-terminal to N-terminal) and a dual-track mechanism incorporating both processive phosphorylation (in which the kinase stays attached to the substrate after each round of phosphorylation) and distributive phosphorylation steps (in which the kinase and substrate dissociate after each phosphorylation event). The RS domain of SRSF1 binds first to a docking groove in the large lobe of the kinase domain of SRPK1. This induces certain structural changes in SRPK1 and/or RRM2 domain of SRSF1, allowing RRM2 to bind the kinase and initiate phosphorylation. The cycles continue for several phosphorylation steps in a processive manner (steps 1-8) until the last few phosphorylation steps (approximately steps 9-12). During that time, a mechanical stress induces the unfolding of the beta-4 motif in RRM2, which then docks at the docking groove of SRPK1. This also signals RRM2 to begin to dissociate, which facilitates SRSF1 dissociation after phosphorylation is completed. Isoform 2 can mediate hepatitis B virus (HBV) core protein phosphorylation. It plays a negative role in the regulation of HBV replication through a mechanism not involving the phosphorylation of the core protein but by reducing the packaging efficiency of the pregenomic RNA (pgRNA) without affecting the formation of the viral core particles. Isoform 1 and isoform 2 can induce splicing of exon 10 in MAPT/TAU. The ratio of isoform 1/isoform 2 plays a decisive role in determining cell fate in K-562 leukaemic cell line: isoform 2 favors proliferation where as isoform 1 favors differentiation. The chain is SRSF protein kinase 1 from Homo sapiens (Human).